A 1097-amino-acid chain; its full sequence is MSLLATPMPQAATASSSSSASAAASASGIPITANNNLPFEKDKIWYFSNDQLANSPSRRCGIKGDDELQYRQMTAYLIQEMGQRLQVSQLCINTAIVYMHRFYAFHSFTHFHRNSMASASLFLAAKVEEQPRKLEHVIRAANKCLPPTTEQNYAELAQELVFNENVLLQTLGFDVAIDHPHTHVVRTCQLVKACKDLAQTSYFLASNSLHLTSMCLQYRPTVVACFCIYLACKWSRWEIPQSTEGKHWFYYVDKTVSLDLLKQLTDEFIAIYEKSPARLKSKLNSIKAIAQGASNRTANSKDKPKEDWKITEMMKGYHSNITTPPELLNGNDSRDRDRDRERERERERDPSSLLPPPAMVPQQRRQDGGHQRSSSVSGVPGSSSSSSSSSHKMPNYPGGMPPDAHTDHKSKQPGYNNRMPSSHQRSSSSGLGSSGSGSQRSSSSSSSSSQQPGRPSMPVDYHKSSRGMPPVGVGMPPHGSHKMTSGSKPQQPQQQPVPHPSASNSSASGMSSKDKSQSNKMYPNAPPPYSNSAPQNPLMSRGGYPGASNGSQPPPPAGYGGHRSKSGSTVHGMPPFEQQLPYSQSQSYGHMQQQPVPQSQQQQMPPEASQHSLQSKNSLFSPEWPDIKKEPMSQSQPQPFNGLLPPPAPPGHDYKLNSHPRDKESPKKERLTPTKKDKHRPVMPPVGSGNSSSGSGSSKPMLPPHKKQIPHGGDLLTNPGESGSLKRPNEISGSQYGLNKLDEIDNSNMPREKLRKLDTTTGLPTYPNYEEKHTPLNMSNGIETTPDLVRSLLKESLCPSNASLLKPDALTMPGLKPPAELLEPMPAPATIKKEQGITPMTSLASGPAPMDLEVPTKQAGEIKEESSSKSEKKKKKDKHKHKEKDKSKDKTEKEERKKHKKDKQKDRSGSGGSKDSSLPNEPLKMVIKNPNGSLQAGASAPIKLKISKNKVEPNNYSAAAGLPGAIGYGLPPTTATTTSASIGAAAPVLPPYGAGGGGYSSSGGSSSGGSSKKKHSDRDRDKESKKNKSQDYAKYNGAGGGIFNPLGGAGAAPNMSGGMGAPMSTAVPPSMLLAPTGAVPPSAAGLAPPPMPVYNKK.

3 disordered regions span residues 319–782 (SNIT…SNGI), 804–936 (LLKP…SLQA), and 985–1097 (AAPV…YNKK). Over residues 332 to 350 (DSRDRDRDRERERERERDP) the composition is skewed to basic and acidic residues. Composition is skewed to low complexity over residues 373–390 (SSSV…SSSS), 420–456 (PSSH…GRPS), 467–478 (GMPPVGVGMPPH), and 489–511 (PQQP…SGMS). Over residues 580–591 (LPYSQSQSYGHM) the composition is skewed to polar residues. Residues 592-606 (QQQPVPQSQQQQMPP) are compositionally biased toward low complexity. Residues 609-620 (SQHSLQSKNSLF) are compositionally biased toward polar residues. Residues 652–675 (HDYKLNSHPRDKESPKKERLTPTK) are compositionally biased toward basic and acidic residues. A compositionally biased stretch (low complexity) spans 687-698 (GSGNSSSGSGSS). A compositionally biased stretch (basic and acidic residues) spans 860–870 (GEIKEESSSKS). Basic residues predominate over residues 871-883 (EKKKKKDKHKHKE). Residues 884–895 (KDKSKDKTEKEE) are compositionally biased toward basic and acidic residues. A Phosphoserine modification is found at Ser916. The span at 993-1007 (GAGGGGYSSSGGSSS) shows a compositional bias: gly residues. Residues 1016–1031 (SDRDRDKESKKNKSQD) are compositionally biased toward basic and acidic residues. Gly residues predominate over residues 1037-1050 (GAGGGIFNPLGGAG). The span at 1087–1097 (APPPMPVYNKK) shows a compositional bias: pro residues.

It belongs to the cyclin family. Cyclin C subfamily. As to quaternary structure, component of the super elongation complex (SEC), at least composed of Ell, Cdk9, cyclin-T (CycT), lilli and ear. Associates with CDK9 to form P-TEFb.

It localises to the nucleus. Functionally, regulatory subunit of the cyclin-dependent kinase pair (CDK9/cyclin T) complex, also called positive transcription elongation factor B (P-TEFb), which is proposed to facilitate the transition from abortive to production elongation by phosphorylating the CTD (carboxy-terminal domain) of the large subunit of RNA polymerase II (RNAP II). The protein is Cyclin-T (CycT) of Drosophila melanogaster (Fruit fly).